The following is a 188-amino-acid chain: MNITATVLLAFGMSMDAFAASIGKGATLHKPKFSEALRTGLIFGAVETLTPLIGWGLGMLASKFVLEWNHWVAFILLVFLGIRMIIEGVRGGNDEDDEPLRRHSFWLLVTTAIATSLDAMAVGVGLAFLQVNIIATALAIGCATLIMSTLGIMVGRFIGPLLGKRAEILGGAVLIGIGAQILWTHFHG.

The next 6 membrane-spanning stretches (helical) occupy residues 3–23 (ITAT…ASIG), 41–61 (LIFG…GMLA), 66–86 (LEWN…RMII), 107–129 (LLVT…LAFL), 143–163 (ATLI…PLLG), and 168–188 (ILGG…HFHG).

It belongs to the MntP (TC 9.B.29) family.

The protein localises to the cell inner membrane. Its function is as follows. Probably functions as a manganese efflux pump. In Citrobacter koseri (strain ATCC BAA-895 / CDC 4225-83 / SGSC4696), this protein is Putative manganese efflux pump MntP.